Reading from the N-terminus, the 434-residue chain is Alpha-enolase (434 aa).

The residue at position 2 (serine 2) is an N-acetylserine. The residue at position 5 (lysine 5) is an N6-acetyllysine. Serine 40 provides a ligand contact to Mg(2+). Tyrosine 44 is subject to Phosphotyrosine. Lysine 60 is subject to N6-acetyllysine; alternate. At lysine 60 the chain carries N6-succinyllysine; alternate. An N6-acetyllysine mark is found at lysine 64 and lysine 71. At lysine 89 the chain carries N6-acetyllysine; alternate. Residue lysine 89 is modified to N6-succinyllysine; alternate. N6-acetyllysine is present on lysine 126. Substrate is bound by residues histidine 158 and glutamate 167. An N6-acetyllysine mark is found at lysine 193 and lysine 199. Lysine 202 is subject to N6-acetyllysine; alternate. Lysine 202 is covalently cross-linked (Glycyl lysine isopeptide (Lys-Gly) (interchain with G-Cter in SUMO2); alternate). Glutamate 210 serves as the catalytic Proton donor. Lysine 228 and lysine 233 each carry N6-acetyllysine; alternate. N6-succinyllysine; alternate is present on lysine 228. Lysine 228 carries the N6-(2-hydroxyisobutyryl)lysine; alternate modification. Residue lysine 233 is modified to N6-malonyllysine; alternate. Position 245 (aspartate 245) interacts with Mg(2+). N6-acetyllysine is present on lysine 256. Serine 263 bears the Phosphoserine mark. Lysine 281 bears the N6-acetyllysine; alternate mark. Lysine 281 carries the N6-(2-hydroxyisobutyryl)lysine; alternate modification. The residue at position 285 (lysine 285) is an N6-acetyllysine. Tyrosine 287 is subject to Phosphotyrosine. At serine 291 the chain carries Phosphoserine. Mg(2+) is bound by residues glutamate 293 and aspartate 318. Substrate contacts are provided by glutamate 293 and aspartate 318. N6-acetyllysine occurs at positions 335 and 343. Lysine 343 serves as the catalytic Proton acceptor. Substrate-binding positions include 370 to 373 (SHRS) and lysine 394. Residues 405–434 (AKYNQILRIEEELGSKAKFAGRSFRNPLAK) form a required for interaction with PLG region. An N6-acetyllysine modification is found at lysine 406. The residue at position 420 (lysine 420) is an N6-acetyllysine; alternate. The residue at position 420 (lysine 420) is an N6-succinyllysine; alternate. Position 420 is an N6-malonyllysine; alternate (lysine 420).

It belongs to the enolase family. Mammalian enolase is composed of 3 isozyme subunits, alpha, beta and gamma, which can form homodimers or heterodimers which are cell-type and development-specific. ENO1 interacts with PLG in the neuronal plasma membrane and promotes its activation. The C-terminal lysine is required for this binding. Interacts with ENO4 and PGAM2. Interacts with CMTM6. Mg(2+) serves as cofactor. ISGylated. Post-translationally, lysine 2-hydroxyisobutyrylation (Khib) by p300/EP300 activates the phosphopyruvate hydratase activity. In terms of tissue distribution, expressed in flagella of epididymal sperm. The alpha/alpha homodimer is expressed in embryo and in most adult tissues. The alpha/beta heterodimer and the beta/beta homodimer are found in striated muscle, and the alpha/gamma heterodimer and the gamma/gamma homodimer in neurons.

The protein localises to the cytoplasm. The protein resides in the cell membrane. The enzyme catalyses (2R)-2-phosphoglycerate = phosphoenolpyruvate + H2O. It participates in carbohydrate degradation; glycolysis; pyruvate from D-glyceraldehyde 3-phosphate: step 4/5. In terms of biological role, glycolytic enzyme that catalyzes the conversion of 2-phosphoglycerate to phosphoenolpyruvate. In addition to glycolysis, involved in various processes such as growth control, hypoxia tolerance and allergic responses. May also function in the intravascular and pericellular fibrinolytic system due to its ability to serve as a receptor and activator of plasminogen on the cell surface of several cell-types such as leukocytes and neurons. Stimulates immunoglobulin production. This is Alpha-enolase (Eno1) from Rattus norvegicus (Rat).